We begin with the raw amino-acid sequence, 159 residues long: 2-C-methyl-D-erythritol 2,4-cyclodiphosphate synthase (159 aa).

A divalent metal cation-binding residues include Asp-8 and His-10. Residues 8–10 (DVH) and 34–35 (HS) each bind 4-CDP-2-C-methyl-D-erythritol 2-phosphate. His-42 serves as a coordination point for a divalent metal cation. 4-CDP-2-C-methyl-D-erythritol 2-phosphate contacts are provided by residues 56-58 (DIG), 61-65 (FPDTD), 100-106 (AQAPKML), 132-135 (TTTE), Phe-139, and Arg-142.

Belongs to the IspF family. As to quaternary structure, homotrimer. Requires a divalent metal cation as cofactor.

It carries out the reaction 4-CDP-2-C-methyl-D-erythritol 2-phosphate = 2-C-methyl-D-erythritol 2,4-cyclic diphosphate + CMP. The protein operates within isoprenoid biosynthesis; isopentenyl diphosphate biosynthesis via DXP pathway; isopentenyl diphosphate from 1-deoxy-D-xylulose 5-phosphate: step 4/6. Functionally, involved in the biosynthesis of isopentenyl diphosphate (IPP) and dimethylallyl diphosphate (DMAPP), two major building blocks of isoprenoid compounds. Catalyzes the conversion of 4-diphosphocytidyl-2-C-methyl-D-erythritol 2-phosphate (CDP-ME2P) to 2-C-methyl-D-erythritol 2,4-cyclodiphosphate (ME-CPP) with a corresponding release of cytidine 5-monophosphate (CMP). The chain is 2-C-methyl-D-erythritol 2,4-cyclodiphosphate synthase from Citrobacter koseri (strain ATCC BAA-895 / CDC 4225-83 / SGSC4696).